A 78-amino-acid polypeptide reads, in one-letter code: U-scoloptoxin(04)-Er1e (78 aa).

The signal sequence occupies residues M1–A24. A propeptide spanning residues R25–R28 is cleaved from the precursor.

Belongs to the scoloptoxin-04 family. Post-translationally, contains 2 disulfide bonds. As to expression, expressed by the venom gland.

It localises to the secreted. This Ethmostigmus rubripes (Giant centipede) protein is U-scoloptoxin(04)-Er1e.